A 117-amino-acid chain; its full sequence is Protein Wnt-6 (117 aa).

The O-palmitoleoyl serine; by PORCN moiety is linked to residue Ser1. An intrachain disulfide couples Cys83 to Cys98. Asn84 carries N-linked (GlcNAc...) asparagine glycosylation.

This sequence belongs to the Wnt family. In terms of processing, palmitoleoylation is required for efficient binding to frizzled receptors. Depalmitoleoylation leads to Wnt signaling pathway inhibition.

It localises to the secreted. Its subcellular location is the extracellular space. It is found in the extracellular matrix. Ligand for members of the frizzled family of seven transmembrane receptors. Probable developmental protein. May be a signaling molecule which affects the development of discrete regions of tissues. Is likely to signal over only few cell diameters. This chain is Protein Wnt-6 (WNT-6), found in Strongylocentrotus purpuratus (Purple sea urchin).